Here is a 359-residue protein sequence, read N- to C-terminus: sn-1 acyl-lipid omega-3 desaturase (ferredoxin) (359 aa).

The next 2 membrane-spanning stretches (helical) occupy residues 44–64 (LGYF…AAYL) and 67–87 (WFFY…LFVV). The Histidine box-1 signature appears at 89-93 (HDCGH). Positions 125 to 129 (HRTHH) match the Histidine box-2 motif. 3 consecutive transmembrane segments (helical) span residues 153–173 (AWYE…IYLF), 206–226 (LAAF…LFLL), and 228–248 (FYVA…FLHH). Positions 291–295 (HHIFS) match the Histidine box-3 motif.

This sequence belongs to the fatty acid desaturase type 2 family. It depends on Fe(2+) as a cofactor.

It is found in the membrane. The enzyme catalyses a 1-[(9Z,12Z)-octadecdienoyl]-2-acyl-glycerolipid + 2 reduced [2Fe-2S]-[ferredoxin] + O2 + 2 H(+) = a 1-[(9Z,12Z,15Z)-octadectrienoyl]-2-acyl-glycerolipid + 2 oxidized [2Fe-2S]-[ferredoxin] + 2 H2O. The catalysed reaction is a 1-[(6Z,9Z,12Z)-octadectrienoyl]-2-acyl-glycerolipid + 2 reduced [2Fe-2S]-[ferredoxin] + O2 + 2 H(+) = a 1-[(6Z,9Z,12Z,15Z)-octadectetraenoyl]-2-acyl-glycerolipid + 2 oxidized [2Fe-2S]-[ferredoxin] + 2 H2O. It participates in lipid metabolism; polyunsaturated fatty acid biosynthesis. Functionally, desaturase involved in fatty acid biosynthesis. Introduces a double bond at carbon 15 of linoleoyl and gamma-linolenoyl groups attached to the sn-1 position of the glycerol moiety of membrane glycerolipids. The sequence is that of sn-1 acyl-lipid omega-3 desaturase (ferredoxin) from Synechocystis sp. (strain ATCC 27184 / PCC 6803 / Kazusa).